The following is a 471-amino-acid chain: Cysteine--tRNA ligase (471 aa).

Cys-29 provides a ligand contact to Zn(2+). Positions 31 to 41 match the 'HIGH' region motif; sequence PTVYDYFHIGN. Zn(2+)-binding residues include Cys-212, His-237, and Glu-241. The short motif at 269 to 273 is the 'KMSKS' region element; sequence KMSKS. Lys-272 is a binding site for ATP.

The protein belongs to the class-I aminoacyl-tRNA synthetase family. In terms of assembly, monomer. The cofactor is Zn(2+).

It is found in the cytoplasm. It catalyses the reaction tRNA(Cys) + L-cysteine + ATP = L-cysteinyl-tRNA(Cys) + AMP + diphosphate. This is Cysteine--tRNA ligase from Symbiobacterium thermophilum (strain DSM 24528 / JCM 14929 / IAM 14863 / T).